The sequence spans 304 residues: Undecaprenyl-diphosphatase (304 aa).

8 helical membrane-spanning segments follow: residues F5–P25, G47–L67, I72–S92, F111–D131, L137–I157, I209–G231, T248–I268, and F283–I303.

This sequence belongs to the UppP family.

It localises to the cell membrane. It carries out the reaction di-trans,octa-cis-undecaprenyl diphosphate + H2O = di-trans,octa-cis-undecaprenyl phosphate + phosphate + H(+). In terms of biological role, catalyzes the dephosphorylation of undecaprenyl diphosphate (UPP). Confers resistance to bacitracin. The sequence is that of Undecaprenyl-diphosphatase from Clostridium perfringens (strain ATCC 13124 / DSM 756 / JCM 1290 / NCIMB 6125 / NCTC 8237 / Type A).